Reading from the N-terminus, the 127-residue chain is Large ribosomal subunit protein uL24A (127 aa).

It belongs to the universal ribosomal protein uL24 family. In terms of assembly, component of the large ribosomal subunit (LSU). Mature yeast ribosomes consist of a small (40S) and a large (60S) subunit. The 40S small subunit contains 1 molecule of ribosomal RNA (18S rRNA) and 33 different proteins (encoded by 57 genes). The large 60S subunit contains 3 rRNA molecules (25S, 5.8S and 5S rRNA) and 46 different proteins (encoded by 81 genes).

The protein resides in the cytoplasm. Functionally, component of the ribosome, a large ribonucleoprotein complex responsible for the synthesis of proteins in the cell. The small ribosomal subunit (SSU) binds messenger RNAs (mRNAs) and translates the encoded message by selecting cognate aminoacyl-transfer RNA (tRNA) molecules. The large subunit (LSU) contains the ribosomal catalytic site termed the peptidyl transferase center (PTC), which catalyzes the formation of peptide bonds, thereby polymerizing the amino acids delivered by tRNAs into a polypeptide chain. The nascent polypeptides leave the ribosome through a tunnel in the LSU and interact with protein factors that function in enzymatic processing, targeting, and the membrane insertion of nascent chains at the exit of the ribosomal tunnel. The polypeptide is Large ribosomal subunit protein uL24A (Saccharomyces cerevisiae (strain ATCC 204508 / S288c) (Baker's yeast)).